The sequence spans 305 residues: Probable 2-methylisocitrate lyase 1 (305 aa).

52–54 (SGA) serves as a coordination point for substrate. 2 residues coordinate Mg(2+): Asp91 and Asp93. Substrate contacts are provided by residues 128–129 (CG), Arg163, Glu193, 216–218 (NMT), Arg247, and Arg276.

The protein belongs to the isocitrate lyase/PEP mutase superfamily. Methylisocitrate lyase family. As to quaternary structure, homotetramer; dimer of dimers. The cofactor is Mg(2+).

The catalysed reaction is (2S,3R)-3-hydroxybutane-1,2,3-tricarboxylate = pyruvate + succinate. Catalyzes the thermodynamically favored C-C bond cleavage of (2R,3S)-2-methylisocitrate to yield pyruvate and succinate via an alpha-carboxy-carbanion intermediate. The chain is Probable 2-methylisocitrate lyase 1 from Corynebacterium glutamicum (strain ATCC 13032 / DSM 20300 / JCM 1318 / BCRC 11384 / CCUG 27702 / LMG 3730 / NBRC 12168 / NCIMB 10025 / NRRL B-2784 / 534).